Here is a 196-residue protein sequence, read N- to C-terminus: Somatotropin (196 aa).

The signal sequence occupies residues 1–18; the sequence is MEKVVLLLSVLSLGVVCP. The residue at position 19 (Gln19) is a Pyrrolidone carboxylic acid. Residue His35 participates in Zn(2+) binding. A disulfide bridge connects residues Cys69 and Cys169. Glu178 lines the Zn(2+) pocket. A disulfide bridge links Cys186 with Cys194.

The protein belongs to the somatotropin/prolactin family.

The protein resides in the secreted. Functionally, growth hormone plays an important role in growth control and is involved in the regulation of several anabolic processes. Implicated as an osmoregulatory substance important for seawater adaptation. The polypeptide is Somatotropin (gh) (Siganus guttatus (Orange-spotted spinefoot)).